A 424-amino-acid polypeptide reads, in one-letter code: ATP-citrate synthase alpha chain protein 3 (424 aa).

The citrate site is built by asparagine 343, threonine 345, and arginine 376.

This sequence belongs to the succinate/malate CoA ligase beta subunit family. As to quaternary structure, heterooctamer of 4 alpha and 4 beta chains.

The protein resides in the cytoplasm. It localises to the cytosol. The enzyme catalyses oxaloacetate + acetyl-CoA + ADP + phosphate = citrate + ATP + CoA. Functionally, ATP citrate-lyase is the primary enzyme responsible for the synthesis of cytosolic acetyl-CoA, used for the elongation of fatty acids and biosynthesis of isoprenoids, flavonoids and malonated derivatives. May supply substrate to the cytosolic acetyl-CoA carboxylase, which generates the malonyl-CoA used for the synthesis of a multitude of compounds, including very long chain fatty acids and flavonoids. Required for normal growth and development and elongation of C18 fatty acids to C20 to C24 fatty acids in seeds. In contrast to all known animal ACL enzymes having a homomeric structure, plant ACLs are composed of alpha and beta chains. The sequence is that of ATP-citrate synthase alpha chain protein 3 (ACLA-3) from Arabidopsis thaliana (Mouse-ear cress).